Consider the following 232-residue polypeptide: 2,3,4,5-tetrahydropyridine-2,6-dicarboxylate N-acetyltransferase (232 aa).

The protein belongs to the transferase hexapeptide repeat family. DapH subfamily.

It catalyses the reaction (S)-2,3,4,5-tetrahydrodipicolinate + acetyl-CoA + H2O = L-2-acetamido-6-oxoheptanedioate + CoA. Its pathway is amino-acid biosynthesis; L-lysine biosynthesis via DAP pathway; LL-2,6-diaminopimelate from (S)-tetrahydrodipicolinate (acetylase route): step 1/3. Functionally, catalyzes the transfer of an acetyl group from acetyl-CoA to tetrahydrodipicolinate. The sequence is that of 2,3,4,5-tetrahydropyridine-2,6-dicarboxylate N-acetyltransferase from Streptococcus pneumoniae (strain CGSP14).